The primary structure comprises 1035 residues: Cell-division control histidine kinase PdhS (1035 aa).

Positions 1–613 (MSGSYPFIDI…HADGSEEPVD (613 aa)) are important for polar localization. The interval 500 to 533 (QGLANTRAESETPVSETSSIEPVEPTPPVKTRSE) is disordered. Residues 614 to 1035 (AHLNAIAWRG…VFPPTRVLAD (422 aa)) form an interaction with DivK region. Residues 659–730 (HVEELKTILD…YLHGLSGNGV (72 aa)) form the PAS domain. Residues 802–1031 (RISHEIRTPL…VVEIVFPPTR (230 aa)) form the Histidine kinase domain. Residue His-805 is modified to Phosphohistidine; by autocatalysis.

In terms of assembly, interacts with DivK.

It is found in the cytoplasm. The catalysed reaction is ATP + protein L-histidine = ADP + protein N-phospho-L-histidine.. In terms of biological role, functions as a polar differentiation marker. Essential protein that, by localizing in the old pole of dividing cells, controls cell division and maturation, probably through control of DivK phosphorylation status and cellular distribution, which in turn regulates CtrA, a transcriptional regulator of the minB operon. The asymmetrical localization of this protein is probably required for cells to enter a new division cycle. In Brucella abortus (strain S19), this protein is Cell-division control histidine kinase PdhS (pdhS).